A 550-amino-acid chain; its full sequence is Formate--tetrahydrofolate ligase (550 aa).

60–67 (TPFGEGKT) serves as a coordination point for ATP.

This sequence belongs to the formate--tetrahydrofolate ligase family.

It carries out the reaction (6S)-5,6,7,8-tetrahydrofolate + formate + ATP = (6R)-10-formyltetrahydrofolate + ADP + phosphate. Its pathway is one-carbon metabolism; tetrahydrofolate interconversion. The polypeptide is Formate--tetrahydrofolate ligase (Campylobacter curvus (strain 525.92)).